Here is a 724-residue protein sequence, read N- to C-terminus: 4-alpha-glucanotransferase (724 aa).

It belongs to the disproportionating enzyme family.

It is found in the cytoplasm. The catalysed reaction is Transfers a segment of a (1-&gt;4)-alpha-D-glucan to a new position in an acceptor, which may be glucose or a (1-&gt;4)-alpha-D-glucan.. In Mycobacterium bovis (strain ATCC BAA-935 / AF2122/97), this protein is 4-alpha-glucanotransferase (malQ).